The primary structure comprises 195 residues: MQVQRPPLEAWYMNDSEEDQRLPHHRNPPEYVTLEKLAALGVIHWVLDADNHETDPELSIIRKDRGYNYTDVITVCPEMLPSYEAKIKSFYEEHIHMDEEIRYCLDGSGYFDVRDPEDHWIRIWVRKGDMIVLPAGCYHRFTLDEHNYIMAMRLFVGEPIWTPYNRPQDEHPVRKGYVHQFLQPELLDVDMSISA.

Fe(2+)-binding residues include His94, His96, Glu100, and His139. His94, His96, Glu100, and His139 together coordinate Ni(2+).

This sequence belongs to the acireductone dioxygenase (ARD) family. The cofactor is Fe(2+). Ni(2+) serves as cofactor.

The protein localises to the cytoplasm. It is found in the nucleus. The enzyme catalyses 1,2-dihydroxy-5-(methylsulfanyl)pent-1-en-3-one + O2 = 4-methylsulfanyl-2-oxobutanoate + formate + 2 H(+). It carries out the reaction 1,2-dihydroxy-5-(methylsulfanyl)pent-1-en-3-one + O2 = 3-(methylsulfanyl)propanoate + CO + formate + 2 H(+). It participates in amino-acid biosynthesis; L-methionine biosynthesis via salvage pathway; L-methionine from S-methyl-5-thio-alpha-D-ribose 1-phosphate: step 5/6. In terms of biological role, catalyzes 2 different reactions between oxygen and the acireductone 1,2-dihydroxy-3-keto-5-methylthiopentene (DHK-MTPene) depending upon the metal bound in the active site. Fe-containing acireductone dioxygenase (Fe-ARD) produces formate and 2-keto-4-methylthiobutyrate (KMTB), the alpha-ketoacid precursor of methionine in the methionine recycle pathway. Ni-containing acireductone dioxygenase (Ni-ARD) produces methylthiopropionate, carbon monoxide and formate, and does not lie on the methionine recycle pathway. The chain is Acireductone dioxygenase 2 from Physcomitrium patens (Spreading-leaved earth moss).